We begin with the raw amino-acid sequence, 202 residues long: Histone chaperone ASF1B (202 aa).

Residues 1 to 156 are interaction with histone H3 and CHAF1B; that stretch reads MAKVSVLNVA…TRFHINWDNN (156 aa). Phosphoserine; by TLK2 is present on S198.

Belongs to the ASF1 family. Interacts with histone H3 (via C-terminus), including histone H3.1, H3.2 and H3.3, and histone H4; the interaction with H3 is direct. Interacts with the CHAF1A, CHAF1B and RBBP4 subunits of the CAF-1 complex. Interacts with HAT1, NASP and TAF1. Found in a soluble complex with NASP and histones H3 and H4; the interaction with NASP is probably indirect and mediated by H3-H4. Interacts with CDAN1. Found in a cytosolic complex with CDAN1, ASF1A, IPO4 and histones H3.1 and H4. Interacts with CREBBP. Phosphorylated by TLK1 and TLK2.

It is found in the nucleus. The protein localises to the cytoplasm. It localises to the cytosol. Functionally, histone chaperone that facilitates histone deposition and histone exchange and removal during nucleosome assembly and disassembly. Cooperates with chromatin assembly factor 1 (CAF-1) to promote replication-dependent chromatin assembly. Also involved in the nuclear import of the histone H3-H4 dimer together with importin-4 (IPO4): specifically recognizes and binds newly synthesized histones with the monomethylation of H3 'Lys-9' (H3K9me1) and diacetylation at 'Lys-5' and 'Lys-12' of H4 (H4K5ac and H4K12ac) marks in the cytosol. Does not participate in replication-independent nucleosome deposition which is mediated by ASF1A and HIRA. Required for gonad development. This is Histone chaperone ASF1B (ASF1B) from Bos taurus (Bovine).